A 145-amino-acid chain; its full sequence is Protein SprT-like (145 aa).

Positions 5-140 (DYVREVSLAD…ACGRCHGRLI (136 aa)) constitute a SprT-like domain. A Zn(2+)-binding site is contributed by His64. Residue Glu65 is part of the active site. Zn(2+) is bound at residue His68.

It belongs to the SprT family. Requires Zn(2+) as cofactor.

The protein resides in the cytoplasm. The protein is Protein SprT-like of Streptococcus equi subsp. equi (strain 4047).